The sequence spans 1362 residues: DNA-directed RNA polymerase subunit beta'' (1362 aa).

The Zn(2+) site is built by C224, C295, C302, and C305.

This sequence belongs to the RNA polymerase beta' chain family. RpoC2 subfamily. In plastids the minimal PEP RNA polymerase catalytic core is composed of four subunits: alpha, beta, beta', and beta''. When a (nuclear-encoded) sigma factor is associated with the core the holoenzyme is formed, which can initiate transcription. Zn(2+) serves as cofactor.

The protein localises to the plastid. Its subcellular location is the chloroplast. The catalysed reaction is RNA(n) + a ribonucleoside 5'-triphosphate = RNA(n+1) + diphosphate. In terms of biological role, DNA-dependent RNA polymerase catalyzes the transcription of DNA into RNA using the four ribonucleoside triphosphates as substrates. The polypeptide is DNA-directed RNA polymerase subunit beta'' (Helianthus annuus (Common sunflower)).